Here is a 343-residue protein sequence, read N- to C-terminus: Holliday junction branch migration complex subunit RuvB (343 aa).

The tract at residues methionine 1 to glycine 26 is disordered. Positions glutamate 3 to tyrosine 193 are large ATPase domain (RuvB-L). Over residues threonine 7–valine 16 the composition is skewed to polar residues. ATP contacts are provided by residues leucine 32, arginine 33, glycine 74, lysine 77, threonine 78, threonine 79, glutamate 140–phenylalanine 142, arginine 183, tyrosine 193, and arginine 230. A Mg(2+)-binding site is contributed by threonine 78. The segment at serine 194 to glycine 264 is small ATPAse domain (RuvB-S). Residues glutamate 267–glycine 343 are head domain (RuvB-H). DNA contacts are provided by arginine 322 and arginine 327.

Belongs to the RuvB family. As to quaternary structure, homohexamer. Forms an RuvA(8)-RuvB(12)-Holliday junction (HJ) complex. HJ DNA is sandwiched between 2 RuvA tetramers; dsDNA enters through RuvA and exits via RuvB. An RuvB hexamer assembles on each DNA strand where it exits the tetramer. Each RuvB hexamer is contacted by two RuvA subunits (via domain III) on 2 adjacent RuvB subunits; this complex drives branch migration. In the full resolvosome a probable DNA-RuvA(4)-RuvB(12)-RuvC(2) complex forms which resolves the HJ.

Its subcellular location is the cytoplasm. The catalysed reaction is ATP + H2O = ADP + phosphate + H(+). The RuvA-RuvB-RuvC complex processes Holliday junction (HJ) DNA during genetic recombination and DNA repair, while the RuvA-RuvB complex plays an important role in the rescue of blocked DNA replication forks via replication fork reversal (RFR). RuvA specifically binds to HJ cruciform DNA, conferring on it an open structure. The RuvB hexamer acts as an ATP-dependent pump, pulling dsDNA into and through the RuvAB complex. RuvB forms 2 homohexamers on either side of HJ DNA bound by 1 or 2 RuvA tetramers; 4 subunits per hexamer contact DNA at a time. Coordinated motions by a converter formed by DNA-disengaged RuvB subunits stimulates ATP hydrolysis and nucleotide exchange. Immobilization of the converter enables RuvB to convert the ATP-contained energy into a lever motion, pulling 2 nucleotides of DNA out of the RuvA tetramer per ATP hydrolyzed, thus driving DNA branch migration. The RuvB motors rotate together with the DNA substrate, which together with the progressing nucleotide cycle form the mechanistic basis for DNA recombination by continuous HJ branch migration. Branch migration allows RuvC to scan DNA until it finds its consensus sequence, where it cleaves and resolves cruciform DNA. This is Holliday junction branch migration complex subunit RuvB from Desulfosudis oleivorans (strain DSM 6200 / JCM 39069 / Hxd3) (Desulfococcus oleovorans).